The primary structure comprises 275 residues: Dermonecrotic toxin SpeSicTox-betaIIA2ii (275 aa).

Residue His5 is part of the active site. Glu25 and Asp27 together coordinate Mg(2+). His41 (nucleophile) is an active-site residue. Intrachain disulfides connect Cys45-Cys51 and Cys47-Cys190. Asp85 contacts Mg(2+).

It belongs to the arthropod phospholipase D family. Class II subfamily. It depends on Mg(2+) as a cofactor. In terms of tissue distribution, expressed by the venom gland.

The protein resides in the secreted. It carries out the reaction an N-(acyl)-sphingosylphosphocholine = an N-(acyl)-sphingosyl-1,3-cyclic phosphate + choline. The catalysed reaction is an N-(acyl)-sphingosylphosphoethanolamine = an N-(acyl)-sphingosyl-1,3-cyclic phosphate + ethanolamine. The enzyme catalyses a 1-acyl-sn-glycero-3-phosphocholine = a 1-acyl-sn-glycero-2,3-cyclic phosphate + choline. It catalyses the reaction a 1-acyl-sn-glycero-3-phosphoethanolamine = a 1-acyl-sn-glycero-2,3-cyclic phosphate + ethanolamine. Its function is as follows. Dermonecrotic toxins cleave the phosphodiester linkage between the phosphate and headgroup of certain phospholipids (sphingolipid and lysolipid substrates), forming an alcohol (often choline) and a cyclic phosphate. This toxin acts on sphingomyelin (SM). It may also act on ceramide phosphoethanolamine (CPE), lysophosphatidylcholine (LPC) and lysophosphatidylethanolamine (LPE), but not on lysophosphatidylserine (LPS), and lysophosphatidylglycerol (LPG). It acts by transphosphatidylation, releasing exclusively cyclic phosphate products as second products. Induces dermonecrosis, hemolysis, increased vascular permeability, edema, inflammatory response, and platelet aggregation. This is Dermonecrotic toxin SpeSicTox-betaIIA2ii from Sicarius peruensis (Six-eyed sand spider).